Consider the following 105-residue polypeptide: Pyrimidine/purine nucleoside phosphorylase (105 aa).

It belongs to the nucleoside phosphorylase PpnP family.

It carries out the reaction a purine D-ribonucleoside + phosphate = a purine nucleobase + alpha-D-ribose 1-phosphate. The enzyme catalyses adenosine + phosphate = alpha-D-ribose 1-phosphate + adenine. The catalysed reaction is cytidine + phosphate = cytosine + alpha-D-ribose 1-phosphate. It catalyses the reaction guanosine + phosphate = alpha-D-ribose 1-phosphate + guanine. It carries out the reaction inosine + phosphate = alpha-D-ribose 1-phosphate + hypoxanthine. The enzyme catalyses thymidine + phosphate = 2-deoxy-alpha-D-ribose 1-phosphate + thymine. The catalysed reaction is uridine + phosphate = alpha-D-ribose 1-phosphate + uracil. It catalyses the reaction xanthosine + phosphate = alpha-D-ribose 1-phosphate + xanthine. Catalyzes the phosphorolysis of diverse nucleosides, yielding D-ribose 1-phosphate and the respective free bases. Can use uridine, adenosine, guanosine, cytidine, thymidine, inosine and xanthosine as substrates. Also catalyzes the reverse reactions. This is Pyrimidine/purine nucleoside phosphorylase from Ralstonia pickettii (strain 12J).